A 262-amino-acid chain; its full sequence is Cytochrome c oxidase subunit 3 (262 aa).

6 helical membrane passes run 39–59 (YDIS…YQWW), 83–103 (GMIL…WAFF), 120–140 (MGII…ILLA), 163–183 (GLFF…YEYI), 198–218 (FFMA…FLLV), and 240–260 (AWYW…IYWW).

The protein belongs to the cytochrome c oxidase subunit 3 family. As to quaternary structure, component of the cytochrome c oxidase (complex IV, CIV), a multisubunit enzyme composed of a catalytic core of 3 subunits and several supernumerary subunits. The complex exists as a monomer or a dimer and forms supercomplexes (SCs) in the inner mitochondrial membrane with ubiquinol-cytochrome c oxidoreductase (cytochrome b-c1 complex, complex III, CIII).

It localises to the mitochondrion inner membrane. It carries out the reaction 4 Fe(II)-[cytochrome c] + O2 + 8 H(+)(in) = 4 Fe(III)-[cytochrome c] + 2 H2O + 4 H(+)(out). Its function is as follows. Component of the cytochrome c oxidase, the last enzyme in the mitochondrial electron transport chain which drives oxidative phosphorylation. The respiratory chain contains 3 multisubunit complexes succinate dehydrogenase (complex II, CII), ubiquinol-cytochrome c oxidoreductase (cytochrome b-c1 complex, complex III, CIII) and cytochrome c oxidase (complex IV, CIV), that cooperate to transfer electrons derived from NADH and succinate to molecular oxygen, creating an electrochemical gradient over the inner membrane that drives transmembrane transport and the ATP synthase. Cytochrome c oxidase is the component of the respiratory chain that catalyzes the reduction of oxygen to water. Electrons originating from reduced cytochrome c in the intermembrane space (IMS) are transferred via the dinuclear copper A center (CU(A)) of subunit 2 and heme A of subunit 1 to the active site in subunit 1, a binuclear center (BNC) formed by heme A3 and copper B (CU(B)). The BNC reduces molecular oxygen to 2 water molecules using 4 electrons from cytochrome c in the IMS and 4 protons from the mitochondrial matrix. The polypeptide is Cytochrome c oxidase subunit 3 (mt:CoIII) (Drosophila melanogaster (Fruit fly)).